A 945-amino-acid polypeptide reads, in one-letter code: Isoleucine--tRNA ligase (945 aa).

The 'HIGH' region signature appears at 66-76; it reads PYANGDIHLGH. Glu-581 lines the L-isoleucyl-5'-AMP pocket. The short motif at 622–626 is the 'KMSKS' region element; it reads KMSKS. Residue Lys-625 coordinates ATP. Zn(2+)-binding residues include Cys-908, Cys-911, Cys-928, and Cys-931.

It belongs to the class-I aminoacyl-tRNA synthetase family. IleS type 1 subfamily. In terms of assembly, monomer. Zn(2+) is required as a cofactor.

Its subcellular location is the cytoplasm. The enzyme catalyses tRNA(Ile) + L-isoleucine + ATP = L-isoleucyl-tRNA(Ile) + AMP + diphosphate. Catalyzes the attachment of isoleucine to tRNA(Ile). As IleRS can inadvertently accommodate and process structurally similar amino acids such as valine, to avoid such errors it has two additional distinct tRNA(Ile)-dependent editing activities. One activity is designated as 'pretransfer' editing and involves the hydrolysis of activated Val-AMP. The other activity is designated 'posttransfer' editing and involves deacylation of mischarged Val-tRNA(Ile). The chain is Isoleucine--tRNA ligase from Burkholderia lata (strain ATCC 17760 / DSM 23089 / LMG 22485 / NCIMB 9086 / R18194 / 383).